Reading from the N-terminus, the 73-residue chain is uncharacterized protein (73 aa).

Residues 1-22 (MKILGVTGFILICLLAISVLMD) form the signal peptide. The chain crosses the membrane as a helical span at residues 44-66 (TFAEWVVLLFFVLVLVREMYVIY).

It localises to the membrane. This is an uncharacterized protein from Bacillus subtilis (strain 168).